A 247-amino-acid chain; its full sequence is Proteasome subunit alpha (247 aa).

The protein belongs to the peptidase T1A family. The 20S proteasome core is composed of 14 alpha and 14 beta subunits that assemble into four stacked heptameric rings, resulting in a barrel-shaped structure. The two inner rings, each composed of seven catalytic beta subunits, are sandwiched by two outer rings, each composed of seven alpha subunits. The catalytic chamber with the active sites is on the inside of the barrel. Has a gated structure, the ends of the cylinder being occluded by the N-termini of the alpha-subunits. Is capped at one or both ends by the proteasome regulatory ATPase, PAN.

The protein localises to the cytoplasm. With respect to regulation, the formation of the proteasomal ATPase PAN-20S proteasome complex, via the docking of the C-termini of PAN into the intersubunit pockets in the alpha-rings, triggers opening of the gate for substrate entry. Interconversion between the open-gate and close-gate conformations leads to a dynamic regulation of the 20S proteasome proteolysis activity. Functionally, component of the proteasome core, a large protease complex with broad specificity involved in protein degradation. In Methanosarcina thermophila, this protein is Proteasome subunit alpha.